A 261-amino-acid polypeptide reads, in one-letter code: tRNA (guanine-N(1)-)-methyltransferase (261 aa).

S-adenosyl-L-methionine-binding positions include Gly113 and Ile133 to Leu138.

Belongs to the RNA methyltransferase TrmD family. As to quaternary structure, homodimer.

Its subcellular location is the cytoplasm. The enzyme catalyses guanosine(37) in tRNA + S-adenosyl-L-methionine = N(1)-methylguanosine(37) in tRNA + S-adenosyl-L-homocysteine + H(+). Functionally, specifically methylates guanosine-37 in various tRNAs. The chain is tRNA (guanine-N(1)-)-methyltransferase from Xylella fastidiosa (strain M23).